A 1357-amino-acid polypeptide reads, in one-letter code: Mediator of RNA polymerase II transcription subunit 13 (1357 aa).

2 disordered regions span residues 356–391 (SCNY…GNGF) and 420–487 (DLWN…HRKE). Polar residues predominate over residues 435-451 (INPTSQQGDSARITSGS).

The protein belongs to the Mediator complex subunit 13 family. In terms of assembly, component of the SRB8-11 complex, which itself associates with the Mediator complex.

The protein localises to the nucleus. Its function is as follows. Component of the SRB8-11 complex. The SRB8-11 complex is a regulatory module of the Mediator complex which is itself involved in regulation of basal and activated RNA polymerase II-dependent transcription. The SRB8-11 complex may be involved in the transcriptional repression of a subset of genes regulated by Mediator. It may inhibit the association of the Mediator complex with RNA polymerase II to form the holoenzyme complex. The chain is Mediator of RNA polymerase II transcription subunit 13 (SSN2) from Eremothecium gossypii (strain ATCC 10895 / CBS 109.51 / FGSC 9923 / NRRL Y-1056) (Yeast).